A 231-amino-acid polypeptide reads, in one-letter code: Small ribosomal subunit protein uS5 (231 aa).

A disordered region spans residues 1-63 (MADLENKTVK…KSVDRANKVK (63 aa)). Residues 29-60 (KRTESGAKKQIWEKRSAHDSKDMPKKSVDRAN) are compositionally biased toward basic and acidic residues. The S5 DRBM domain maps to 75-138 (FSEKVVNISR…KDARNHLISV (64 aa)).

The protein belongs to the universal ribosomal protein uS5 family. In terms of assembly, part of the 30S ribosomal subunit. Contacts proteins S4 and S8.

Functionally, with S4 and S12 plays an important role in translational accuracy. In terms of biological role, located at the back of the 30S subunit body where it stabilizes the conformation of the head with respect to the body. This chain is Small ribosomal subunit protein uS5, found in Mycoplasmopsis agalactiae (strain NCTC 10123 / CIP 59.7 / PG2) (Mycoplasma agalactiae).